We begin with the raw amino-acid sequence, 215 residues long: MPTVLVTGFDPFENEPVNPSWEAVRTLDGQGIAGADIVTRQLPTVFGESIRVLDRLLMSLRPDVVIAVGQAGGRAEMAIERVAINVDDARIADNAGRQPIDTAIVAGGPAAYFSTLPIKAIVHELRAAGVPASVSQTAGTFVCNHVFYGLMHAIAHHGLHARGGFIHIPYLPAQAAGHPGQPSMAHDTVVAGLRIAIETTLRRQEDIREAGGQLH.

Residues Glu-80, Cys-143, and His-167 contribute to the active site.

It belongs to the peptidase C15 family. Homotetramer.

The protein localises to the cytoplasm. It catalyses the reaction Release of an N-terminal pyroglutamyl group from a polypeptide, the second amino acid generally not being Pro.. Removes 5-oxoproline from various penultimate amino acid residues except L-proline. The chain is Pyrrolidone-carboxylate peptidase 1 from Ralstonia nicotianae (strain ATCC BAA-1114 / GMI1000) (Ralstonia solanacearum).